Reading from the N-terminus, the 119-residue chain is Small ribosomal subunit protein uS17 (119 aa).

Residues 1–21 are compositionally biased toward low complexity; sequence MAEAKTGAKATKSAAAGAADG. The interval 1–44 is disordered; that stretch reads MAEAKTGAKATKSAAAGAADGASKEKGPKHTPSTPKPRGRRKTR.

This sequence belongs to the universal ribosomal protein uS17 family. In terms of assembly, part of the 30S ribosomal subunit.

In terms of biological role, one of the primary rRNA binding proteins, it binds specifically to the 5'-end of 16S ribosomal RNA. This chain is Small ribosomal subunit protein uS17, found in Mycobacterium marinum (strain ATCC BAA-535 / M).